We begin with the raw amino-acid sequence, 258 residues long: Isoprenyl transferase (258 aa).

Asp-38 is a catalytic residue. Asp-38 provides a ligand contact to Mg(2+). Residues 39-42 (GNGR), Trp-43, Arg-51, His-55, and 83-85 (STE) contribute to the substrate site. Asn-86 serves as the catalytic Proton acceptor. Substrate contacts are provided by residues Trp-87, Arg-89, Arg-206, and 212 to 214 (RIS). Glu-225 contacts Mg(2+).

This sequence belongs to the UPP synthase family. Homodimer. Mg(2+) serves as cofactor.

Its function is as follows. Catalyzes the condensation of isopentenyl diphosphate (IPP) with allylic pyrophosphates generating different type of terpenoids. The chain is Isoprenyl transferase from Bacillus cereus (strain ATCC 10987 / NRS 248).